Consider the following 194-residue polypeptide: Histone H1.0-A (194 aa).

Disordered stretches follow at residues 1 to 29 (MTEN…YSDM) and 96 to 194 (ADEV…GRKK). An H15 domain is found at 22 to 95 (DHPKYSDMIL…GASGSFRLAK (74 aa)). Basic residues-rich tracts occupy residues 102–164 (PAKK…KTVR) and 172–194 (KAKK…GRKK).

Belongs to the histone H1/H5 family.

It localises to the nucleus. The protein resides in the chromosome. Functionally, histones H1 are necessary for the condensation of nucleosome chains into higher-order structures. The histones H1.0 are found in cells that are in terminal stages of differentiation or that have low rates of cell division. The sequence is that of Histone H1.0-A (h1-0-a) from Xenopus laevis (African clawed frog).